The primary structure comprises 637 residues: Sodium-dependent phosphate transport protein 2A (637 aa).

The Cytoplasmic portion of the chain corresponds to 1 to 103; sequence MMSYSERLGG…LAQVGTKLLK (103 aa). Serine 14 and serine 34 each carry phosphoserine. Residues 104–125 form a helical membrane-spanning segment; it reads VPLMLAFLYLFVCSLDVLSSAF. At 126 to 145 the chain is on the extracellular side; the sequence is QLAGGKVAGDIFKDNAILSN. The chain crosses the membrane as a helical span at residues 146–163; the sequence is PVAGLVVGILVTVLVQSS. The Cytoplasmic portion of the chain corresponds to 164–165; it reads ST. A helical transmembrane segment spans residues 166 to 185; that stretch reads STSIIVSMVSSGLLEVSSAI. Residues 186–345 are Extracellular-facing; the sequence is PIIMGSNIGT…HIFVDTGLPD (160 aa). 2 cysteine pairs are disulfide-bonded: cysteine 225/cysteine 520 and cysteine 306/cysteine 334. Asparagine 298 and asparagine 328 each carry an N-linked (GlcNAc...) asparagine glycan. A helical membrane pass occupies residues 346-368; the sequence is LAVGLILLAGSLVVLCTCLILLV. Residues 369 to 410 are Cytoplasmic-facing; that stretch reads KMLNSLLKGQVMSSRRSSTQTDFPAPFTWVTGYFAMVVGASM. The helical transmembrane segment at 411–434 threads the bilayer; it reads TFVVQSSSVFTSAITPLIGLGVIS. At 435–464 the chain is on the extracellular side; it reads IERAYPLTLGSNIGTTTTAILAALASPREK. Residues 465-485 traverse the membrane as a helical segment; sequence LSSSFQIALCHFFFNISGILL. Topologically, residues 486–511 are cytoplasmic; it reads WYPLPCTRLPIRMAKALGKRTAKYRW. At threonine 506 the chain carries Phosphothreonine; by PKC. A helical transmembrane segment spans residues 512 to 532; that stretch reads FAVLYLLVCFLLLPSLVFGIS. Topologically, residues 533–537 are extracellular; that stretch reads MAGWQ. The chain crosses the membrane as a helical span at residues 538–559; that stretch reads AMVGVGTPFGALLAFVVLVNVL. The Cytoplasmic segment spans residues 560–637; that stretch reads QSRSPGHLPK…LPAHHNATRL (78 aa). Position 605 is a phosphoserine (serine 605). Threonine 621 carries the post-translational modification Phosphothreonine. A Phosphoserine modification is found at serine 623.

This sequence belongs to the SLC34A transporter family. In terms of assembly, interacts via its C-terminal region with NHERF4. Interacts with NHERF1. Interacts with TMEM174; regulates SLC34A1 internalization by PTH and FGF23. As to expression, kidney.

The protein localises to the apical cell membrane. Its subcellular location is the cell membrane. It catalyses the reaction 3 Na(+)(out) + phosphate(out) = 3 Na(+)(in) + phosphate(in). In terms of biological role, involved in actively transporting phosphate into cells via Na(+) cotransport in the renal brush border membrane. The cotransport has a Na(+):Pi stoichiometry of 3:1 and is electrogenic. In Mus musculus (Mouse), this protein is Sodium-dependent phosphate transport protein 2A.